The following is a 265-amino-acid chain: Deoxyguanosine kinase, mitochondrial (265 aa).

Residue 32–40 (GNIAVGKST) participates in ATP binding. Glu57, Tyr88, Gln99, and Arg106 together coordinate substrate. The Proton acceptor role is filled by Glu129. Substrate contacts are provided by Arg130 and Asp135. 190–194 (RLQRR) contributes to the ATP binding site. Glu199 lines the substrate pocket. ATP is bound at residue 242–244 (EDF).

The protein belongs to the DCK/DGK family. As to quaternary structure, homodimer.

The protein localises to the mitochondrion. The enzyme catalyses 2'-deoxyguanosine + ATP = dGMP + ADP + H(+). Functionally, phosphorylates deoxyguanosine in the mitochondrial matrix with high efficiency but shows very low activity against other deoxynucleosides. The polypeptide is Deoxyguanosine kinase, mitochondrial (Xenopus laevis (African clawed frog)).